The chain runs to 174 residues: Methylamine utilization protein MauL (174 aa).

It participates in one-carbon metabolism; methylamine degradation. Functionally, probably involved in TTQ prosthetic group biosynthesis. This is Methylamine utilization protein MauL (mauL) from Methylophilus methylotrophus (Bacterium W3A1).